Reading from the N-terminus, the 156-residue chain is 16 kDa phloem protein 1 (156 aa).

The C2 domain occupies 1–108; it reads MAVGILEVSL…LEMGVEKGTA (108 aa). Positions 20, 26, 78, 80, 83, and 86 each coordinate Ca(2+).

The cofactor is Ca(2+).

Its function is as follows. Binds to both sense and antisense RNA. Can also bind sheared DNA and dodecamer DNA with a low affinity. Interacts with mesophyll plasmodesmata to mediate its own cell-to-cell transport and potentiate RNA trafficking. May play a role in plant defense signaling. The sequence is that of 16 kDa phloem protein 1 from Arabidopsis thaliana (Mouse-ear cress).